The primary structure comprises 177 residues: Isopentenyl-diphosphate Delta-isomerase 1 (177 aa).

Positions 24 and 30 each coordinate Mn(2+). The Nudix hydrolase domain occupies S28 to A160. C65 is a catalytic residue. Residue C65 coordinates Mg(2+). H67 is a Mn(2+) binding site. Residue E85 participates in Mg(2+) binding. Mn(2+)-binding residues include E110 and E112. The active site involves E112.

Belongs to the IPP isomerase type 1 family. The cofactor is Mg(2+). It depends on Mn(2+) as a cofactor.

It localises to the cytoplasm. The enzyme catalyses isopentenyl diphosphate = dimethylallyl diphosphate. Its pathway is isoprenoid biosynthesis; dimethylallyl diphosphate biosynthesis; dimethylallyl diphosphate from isopentenyl diphosphate: step 1/1. In terms of biological role, catalyzes the 1,3-allylic rearrangement of the homoallylic substrate isopentenyl (IPP) to its highly electrophilic allylic isomer, dimethylallyl diphosphate (DMAPP). The polypeptide is Isopentenyl-diphosphate Delta-isomerase 1 (Aromatoleum aromaticum (strain DSM 19018 / LMG 30748 / EbN1) (Azoarcus sp. (strain EbN1))).